Reading from the N-terminus, the 331-residue chain is Glycerol-3-phosphate dehydrogenase [NAD(P)+] (331 aa).

Residues Ser10, Trp11, Arg31, Arg32, and Lys105 each contribute to the NADPH site. Sn-glycerol 3-phosphate-binding residues include Lys105 and Gly135. Ala139 lines the NADPH pocket. Sn-glycerol 3-phosphate is bound by residues Lys190, Asp243, Ser253, Arg254, and Asn255. Residue Lys190 is the Proton acceptor of the active site. Arg254 contributes to the NADPH binding site. Residues Val279 and Glu281 each contribute to the NADPH site.

It belongs to the NAD-dependent glycerol-3-phosphate dehydrogenase family.

The protein localises to the cytoplasm. It carries out the reaction sn-glycerol 3-phosphate + NAD(+) = dihydroxyacetone phosphate + NADH + H(+). The catalysed reaction is sn-glycerol 3-phosphate + NADP(+) = dihydroxyacetone phosphate + NADPH + H(+). The protein operates within membrane lipid metabolism; glycerophospholipid metabolism. Its function is as follows. Catalyzes the reduction of the glycolytic intermediate dihydroxyacetone phosphate (DHAP) to sn-glycerol 3-phosphate (G3P), the key precursor for phospholipid synthesis. The chain is Glycerol-3-phosphate dehydrogenase [NAD(P)+] from Corynebacterium diphtheriae (strain ATCC 700971 / NCTC 13129 / Biotype gravis).